Reading from the N-terminus, the 123-residue chain is Kininogen (123 aa).

Bradykinin is released from kininogen by kallikrein. In terms of processing, N-glycosylated. Contains sulfated N-acetylglucosamine and O-acetylated sialic acids as terminal elements on biantennary and triantennary N-glycans.

Inhibits papain and ficin (cysteine proteinases) but not trypsin (a serine proteinase). The polypeptide is Kininogen (Gadus morhua (Atlantic cod)).